The sequence spans 342 residues: Tetraacyldisaccharide 4'-kinase (342 aa).

Position 68-75 (68-75 (TVGGTGKT)) interacts with ATP.

This sequence belongs to the LpxK family.

The catalysed reaction is a lipid A disaccharide + ATP = a lipid IVA + ADP + H(+). It functions in the pathway glycolipid biosynthesis; lipid IV(A) biosynthesis; lipid IV(A) from (3R)-3-hydroxytetradecanoyl-[acyl-carrier-protein] and UDP-N-acetyl-alpha-D-glucosamine: step 6/6. Functionally, transfers the gamma-phosphate of ATP to the 4'-position of a tetraacyldisaccharide 1-phosphate intermediate (termed DS-1-P) to form tetraacyldisaccharide 1,4'-bis-phosphate (lipid IVA). The chain is Tetraacyldisaccharide 4'-kinase from Burkholderia cenocepacia (strain ATCC BAA-245 / DSM 16553 / LMG 16656 / NCTC 13227 / J2315 / CF5610) (Burkholderia cepacia (strain J2315)).